A 169-amino-acid polypeptide reads, in one-letter code: Peptide deformylase (169 aa).

Fe cation is bound by residues cysteine 92 and histidine 134. Glutamate 135 is a catalytic residue. Histidine 138 provides a ligand contact to Fe cation.

It belongs to the polypeptide deformylase family. It depends on Fe(2+) as a cofactor.

It carries out the reaction N-terminal N-formyl-L-methionyl-[peptide] + H2O = N-terminal L-methionyl-[peptide] + formate. Its function is as follows. Removes the formyl group from the N-terminal Met of newly synthesized proteins. Requires at least a dipeptide for an efficient rate of reaction. N-terminal L-methionine is a prerequisite for activity but the enzyme has broad specificity at other positions. This chain is Peptide deformylase, found in Cellvibrio japonicus (strain Ueda107) (Pseudomonas fluorescens subsp. cellulosa).